We begin with the raw amino-acid sequence, 521 residues long: Glucose-1-phosphate adenylyltransferase small subunit, chloroplastic/amyloplastic (521 aa).

The disordered stretch occupies residues 1–32 (MAASIGALKSSPSSNNCINERRNDSTRAVSSR). The N-terminal 72 residues, 1 to 72 (MAASIGALKS…RSPMIVSPKA (72 aa)), are a transit peptide targeting the chloroplast. K268 is a substrate binding site. Residues 444–454 (TDADRKLLAAK) form an allosteric regulation region.

Belongs to the bacterial/plant glucose-1-phosphate adenylyltransferase family. Heterotetramer. Leaves and tubers.

The protein resides in the plastid. The protein localises to the chloroplast. It is found in the amyloplast. The catalysed reaction is alpha-D-glucose 1-phosphate + ATP + H(+) = ADP-alpha-D-glucose + diphosphate. It functions in the pathway glycan biosynthesis; starch biosynthesis. Activated by 3'phosphoglycerate, inhibited by orthophosphate. Allosteric regulation. This protein plays a role in synthesis of starch. It catalyzes the synthesis of the activated glycosyl donor, ADP-glucose from Glc-1-P and ATP. This is Glucose-1-phosphate adenylyltransferase small subunit, chloroplastic/amyloplastic from Solanum tuberosum (Potato).